The primary structure comprises 29 residues: Cytochrome b6-f complex subunit 8 (29 aa).

A helical membrane pass occupies residues 3–23 (IVSLAWAGLMVVFTFSLSLVV).

It belongs to the PetN family. As to quaternary structure, the 4 large subunits of the cytochrome b6-f complex are cytochrome b6, subunit IV (17 kDa polypeptide, PetD), cytochrome f and the Rieske protein, while the 4 small subunits are PetG, PetL, PetM and PetN. The complex functions as a dimer.

Its subcellular location is the plastid. The protein localises to the chloroplast thylakoid membrane. Functionally, component of the cytochrome b6-f complex, which mediates electron transfer between photosystem II (PSII) and photosystem I (PSI), cyclic electron flow around PSI, and state transitions. The sequence is that of Cytochrome b6-f complex subunit 8 from Arabis hirsuta (Hairy rock-cress).